The sequence spans 206 residues: Small ribosomal subunit protein uS4 (206 aa).

A disordered region spans residues 18–46 (NIWGRPKSPVNRREYGPGQHGQRRKGKIS). In terms of domain architecture, S4 RNA-binding spans 94-154 (RRLDAVVYRA…DRSKQMVALI (61 aa)).

It belongs to the universal ribosomal protein uS4 family. Part of the 30S ribosomal subunit. Contacts protein S5. The interaction surface between S4 and S5 is involved in control of translational fidelity.

One of the primary rRNA binding proteins, it binds directly to 16S rRNA where it nucleates assembly of the body of the 30S subunit. Functionally, with S5 and S12 plays an important role in translational accuracy. This chain is Small ribosomal subunit protein uS4, found in Roseobacter denitrificans (strain ATCC 33942 / OCh 114) (Erythrobacter sp. (strain OCh 114)).